Consider the following 931-residue polypeptide: Beta-mannosidase A (931 aa).

Positions 1–21 are cleaved as a signal peptide; it reads MRHSIGLAAALLAPTLPVALG. N-linked (GlcNAc...) asparagine glycosylation is found at Asn-40, Asn-79, Asn-247, Asn-282, and Asn-347. Glu-479 acts as the Proton donor in catalysis. N-linked (GlcNAc...) asparagine glycosylation is found at Asn-550, Asn-608, Asn-658, Asn-738, Asn-790, Asn-798, Asn-830, and Asn-918.

Belongs to the glycosyl hydrolase 2 family. Beta-mannosidase A subfamily. Homodimer. In terms of processing, N-glycosylated.

It is found in the secreted. It catalyses the reaction Hydrolysis of terminal, non-reducing beta-D-mannose residues in beta-D-mannosides.. Its pathway is glycan metabolism; N-glycan degradation. Exoglycosidase that cleaves the single beta-linked mannose residue from the non-reducing end of beta-mannosidic oligosaccharides of various complexity and length. Involved in the degradation of polymeric mannan and galactomannan. Releases the terminal mannose residue from mannobiose and mannotriose, as well as from galactosyl-mannobiose (GM2), galactosyl-mannotriose (GM3) and di-galactosyl-mannopentaose (G2M5). This is Beta-mannosidase A (mndA) from Aspergillus niger.